An 864-amino-acid chain; its full sequence is MGCWGQLLVWFGAAGAILCSSPGSQETFLRSSPLPLASPSPRDPKVSAPPSILEPASPLNSPGTEGSWLFSTCGASGRHGPTQTQCDGAYAGTSVVVTVGAAGQLRGVQLWRVPGPGQYLISAYGAAGGKGAKNHLSRAHGVFVSAIFSLGLGESLYILVGQQGEDACPGGSPESQLVCLGESRAVEEHAAMDGSEGVPGSRRWAGGGGGGGGATYVFRVRAGELEPLLVAAGGGGRAYLRPRDRGRTQASPEKLENRSEAPGSGGRGGAAGGGGGWTSRAPSPQAGRSLQEGAEGGQGCSEAWATLGWAAAGGFGGGGGACTAGGGGGGYRGGDASETDNLWADGEDGVSFIHPSSELFLQPLAVTENHGEVEIRRHLNCSHCPLRDCQWQAELQLAECLCPEGMELAVDNVTCMDLHKPPGPLVLMVAVVATSTLSLLMVCGVLILVKQKKWQGLQEMRLPSPELELSKLRTSAIRTAPNPYYCQVGLGPAQSWPLPPGVTEVSPANVTLLRALGHGAFGEVYEGLVIGLPGDSSPLQVAIKTLPELCSPQDELDFLMEALIISKFRHQNIVRCVGLSLRATPRLILLELMSGGDMKSFLRHSRPHLGQPSPLVMRDLLQLAQDIAQGCHYLEENHFIHRDIAARNCLLSCAGPSRVAKIGDFGMARDIYRASYYRRGDRALLPVKWMPPEAFLEGIFTSKTDSWSFGVLLWEIFSLGYMPYPGRTNQEVLDFVVGGGRMDPPRGCPGPVYRIMTQCWQHEPELRPSFASILERLQYCTQDPDVLNSLLPMELGPTPEEEGTSGLGNRSLECLRPPQPQELSPEKLKSWGGSPLGPWLSSGLKPLKSRGLQPQNLWNPTYRS.

An N-terminal signal peptide occupies residues 1–16 (MGCWGQLLVWFGAAGA). The Extracellular portion of the chain corresponds to 17 to 424 (ILCSSPGSQE…CMDLHKPPGP (408 aa)). Residues 30-40 (RSSPLPLASPS) are compositionally biased toward low complexity. The disordered stretch occupies residues 30–64 (RSSPLPLASPSPRDPKVSAPPSILEPASPLNSPGT). 2 disulfides stabilise this stretch: Cys-73-Cys-86 and Cys-168-Cys-179. Residues 239–297 (YLRPRDRGRTQASPEKLENRSEAPGSGGRGGAAGGGGGWTSRAPSPQAGRSLQEGAEGG) are disordered. Basic and acidic residues predominate over residues 241-259 (RPRDRGRTQASPEKLENRS). Asn-257 is a glycosylation site (N-linked (GlcNAc...) asparagine). A compositionally biased stretch (gly residues) spans 263 to 277 (GSGGRGGAAGGGGGW). A disulfide bridge links Cys-300 with Cys-322. N-linked (GlcNAc...) asparagine glycans are attached at residues Asn-380 and Asn-412. The chain crosses the membrane as a helical span at residues 425 to 449 (LVLMVAVVATSTLSLLMVCGVLILV). Over 450 to 864 (KQKKWQGLQE…QNLWNPTYRS (415 aa)) the chain is Cytoplasmic. The Protein kinase domain maps to 510–786 (VTLLRALGHG…LQYCTQDPDV (277 aa)). ATP-binding positions include 516 to 524 (LGHGAFGEV) and Lys-544. Residue Asp-643 is the Proton acceptor of the active site. Tyr-676 carries the phosphotyrosine; by autocatalysis modification. 2 disordered regions span residues 790 to 830 (LLPM…KLKS) and 842 to 864 (SGLK…TYRS). Polar residues predominate over residues 852 to 864 (LQPQNLWNPTYRS).

It belongs to the protein kinase superfamily. Tyr protein kinase family. Insulin receptor subfamily. In terms of assembly, homodimer; homodimerizes following ligand-binding. Part of a complex including LTK, TNK2 and GRB2, in which GRB2 promotes LTK recruitment by TNK2. Post-translationally, phosphorylated at tyrosine residues by autocatalysis, which activates kinase activity. As to expression, expressed in non-hematopoietic cell lines and T- and B-cell lines.

It is found in the cell membrane. It carries out the reaction L-tyrosyl-[protein] + ATP = O-phospho-L-tyrosyl-[protein] + ADP + H(+). Activated by ligand-binding, leading to homodimerization and autophosphorylation. In terms of biological role, receptor with a tyrosine-protein kinase activity. Following activation by ALKAL1 or ALKAL2 ligands at the cell surface, transduces an extracellular signal into an intracellular response. Ligand-binding to the extracellular domain induces tyrosine kinase activation, leading to activation of the mitogen-activated protein kinase (MAPK) pathway. Phosphorylates almost exclusively at the first tyrosine of the Y-x-x-x-Y-Y motif. The exact function of this protein is not known; studies with chimeric proteins demonstrate its ability to promote growth and specifically neurite outgrowth, and cell survival. Involved in regulation of the secretory pathway involving endoplasmic reticulum (ER) export sites (ERESs) and ER to Golgi transport. The protein is Leukocyte tyrosine kinase receptor of Homo sapiens (Human).